The following is a 226-amino-acid chain: Protein BASIC PENTACYSTEINE7 (226 aa).

Residues 42–116 (IDLSQEPPAE…PSIPETKREK (75 aa)) are disordered. Residues 66 to 76 (RDSRNDTETVK) show a composition bias toward basic and acidic residues. Over residues 88–105 (LKPKPQRKKRSVSNKSKK) the composition is skewed to basic residues.

This sequence belongs to the BBR/BPC family. Expressed in seedlings, leaves and pistils. Detected in anthers, in pollen grains, in young rosette, in leaf vasculature, in the lateral and primary roots, in embryo sac, and in the whole ovule.

It localises to the nucleus. Transcriptional regulator that specifically binds to GA-rich elements (GAGA-repeats) present in regulatory sequences of genes involved in developmental processes. In Arabidopsis thaliana (Mouse-ear cress), this protein is Protein BASIC PENTACYSTEINE7 (BPC7).